We begin with the raw amino-acid sequence, 258 residues long: ATP synthase subunit a (258 aa).

6 consecutive transmembrane segments (helical) span residues 30-50 (SSYF…VAMS), 85-105 (FFPF…LGMF), 122-142 (LIVT…YGVF), 151-171 (LFVP…IEII), 198-218 (FAGF…LAGI), and 230-250 (LEFL…CIYL).

This sequence belongs to the ATPase A chain family. As to quaternary structure, F-type ATPases have 2 components, CF(1) - the catalytic core - and CF(0) - the membrane proton channel. CF(1) has five subunits: alpha(3), beta(3), gamma(1), delta(1), epsilon(1). CF(0) has three main subunits: a(1), b(2) and c(9-12). The alpha and beta chains form an alternating ring which encloses part of the gamma chain. CF(1) is attached to CF(0) by a central stalk formed by the gamma and epsilon chains, while a peripheral stalk is formed by the delta and b chains.

It localises to the cell inner membrane. Functionally, key component of the proton channel; it plays a direct role in the translocation of protons across the membrane. This chain is ATP synthase subunit a, found in Maricaulis maris (strain MCS10) (Caulobacter maris).